A 373-amino-acid chain; its full sequence is Dual-specificity RNA methyltransferase RlmN (373 aa).

E91 functions as the Proton acceptor in the catalytic mechanism. The Radical SAM core domain maps to E97–D339. The cysteines at positions 104 and 344 are disulfide-linked. The [4Fe-4S] cluster site is built by C111, C115, and C118. Residues G165–E166, S197, S219–H221, and N301 contribute to the S-adenosyl-L-methionine site. The S-methylcysteine intermediate role is filled by C344.

The protein belongs to the radical SAM superfamily. RlmN family. [4Fe-4S] cluster is required as a cofactor.

The protein resides in the cytoplasm. It carries out the reaction adenosine(2503) in 23S rRNA + 2 reduced [2Fe-2S]-[ferredoxin] + 2 S-adenosyl-L-methionine = 2-methyladenosine(2503) in 23S rRNA + 5'-deoxyadenosine + L-methionine + 2 oxidized [2Fe-2S]-[ferredoxin] + S-adenosyl-L-homocysteine. The enzyme catalyses adenosine(37) in tRNA + 2 reduced [2Fe-2S]-[ferredoxin] + 2 S-adenosyl-L-methionine = 2-methyladenosine(37) in tRNA + 5'-deoxyadenosine + L-methionine + 2 oxidized [2Fe-2S]-[ferredoxin] + S-adenosyl-L-homocysteine. Specifically methylates position 2 of adenine 2503 in 23S rRNA and position 2 of adenine 37 in tRNAs. m2A2503 modification seems to play a crucial role in the proofreading step occurring at the peptidyl transferase center and thus would serve to optimize ribosomal fidelity. The polypeptide is Dual-specificity RNA methyltransferase RlmN (Paracidovorax citrulli (strain AAC00-1) (Acidovorax citrulli)).